A 1150-amino-acid chain; its full sequence is MNRNNPNEYEIIDAPYCGCPSDDDVRYPLASDPNAAFQNMNYKEYLQTYDGDYTGSLINPNLSINPRDVLQTGINIVGRILGFLGVPFAGQLVTFYTFLLNQLWPTNDNAVWEAFMAQIEELIDQKISAQVVRNALDDLTGLHDYYEEYLAALEEWLERPNGARANLVTQRFENLHTAFVTRMPSFGTGPGSQRDAVALLTVYAQAANLHLLLLKDAEIYGARWGLQQGQINLYFNAQQERTRIYTNHCVETYNRGLEDVRGTNTESWLNYHRFRREMTLMAMDLVALFPFYNVRQYPNGANPQLTREIYTDPIVYNPPANQGICRRWGNNPYNTFSELENAFIRPPHLFERLNRLTISRNRYTAPTTNSFLDYWSGHTLQSQHANNPTTYETSYGQITSNTRLFNTTNGARAIDSRARNFGNLYANLYGVSSLNIFPTGVMSEITNAANTCRQDLTTTEELPLENNNFNLLSHVTFLRFNTTQGGPLATLGFVPTYVWTREDVDFTNTITADRITQLPWVKASEIGGGTTVVKGPGFTGGDILRRTDGGAVGTIRANVNAPLTQQYRIRLRYASTTSFVVNLFVNNSAAGFTLPSTMAQNGSLTYESFNTLEVTHTIRFSQSDTTLRLNIFPSISGQEVYVDKLEIVPINPTREAEEDLEDAKKAVASLFTRTRDGLQVNVTDYQVDQAANLVSCLSDEQYGHDKKMLLEAVRAAKRLSRERNLLQDPDFNEINSTEENGWKASNGVTISEGGPFFKGRALQLASARENYPTYIYQKVDASTLKPYTRYKLDGFVQSSQDLEIDLIHHHKVHLVKNVPDNLVSDTYSDGSCSGINRCEEQHQVDVQLDAEDHPKDCCEAAQTHEFSSYIHTGDLNASVDQGIWVVLQVRTTDGYATLGNLELVEVGPLSGESLEREQRDNAKWNEEVGRKRAETDRIYQDAKQAINHLFVDYQDQQLSPEVGMADIIDAQNLIASISDVYSDAVLQIPGINYEMYTELSNRLQQASYLYTSRNVVQNGDFNSGLDSWNATTDTAVQQDGNMHFLVLSHWDAQVSQQFRVQPNCKYVLRVTAKKVGNGDGYVTIQDGAHHRETLTFNACDYDVNGTHVNDNSYITKELVFYPKTEHMWVEVSETEGTFYIDSIEFIETQE.

This sequence belongs to the delta endotoxin family.

Functionally, promotes colloidosmotic lysis by binding to the midgut epithelial cells of insects. This Bacillus thuringiensis subsp. aizawai protein is Pesticidal crystal protein Cry9Ea (cry9Ea).